The following is a 317-amino-acid chain: Protoheme IX farnesyltransferase (317 aa).

The next 9 helical transmembrane spans lie at 43–63, 65–85, 119–139, 140–160, 168–188, 195–215, 238–258, 261–281, and 292–312; these read PISVGLLAFTAAAMMVVAGAT, PVSGWLFVQALLAVVLACAGA, ALYWGLFLFVASLGLAWNLNP, IAWITLWGGMLGYVVVYSLWL, IVIGGVSGGMPALFGWAAVTG, VLIAALVVLWIPNHIWSLAIF, LNWLLLTVVLMVVFSVLIYFV, WGLVYLATALVMGAAALALSV, and AWVLFKFSSPYLAVLFLSMMV.

Belongs to the UbiA prenyltransferase family. Protoheme IX farnesyltransferase subfamily. In terms of assembly, interacts with CtaA.

It is found in the cell membrane. It carries out the reaction heme b + (2E,6E)-farnesyl diphosphate + H2O = Fe(II)-heme o + diphosphate. The protein operates within porphyrin-containing compound metabolism; heme O biosynthesis; heme O from protoheme: step 1/1. In terms of biological role, converts heme B (protoheme IX) to heme O by substitution of the vinyl group on carbon 2 of heme B porphyrin ring with a hydroxyethyl farnesyl side group. The chain is Protoheme IX farnesyltransferase from Desulforudis audaxviator (strain MP104C).